Reading from the N-terminus, the 571-residue chain is Putative pyruvate decarboxylase C13A11.06 (571 aa).

2 residues coordinate pyruvate: Asp29 and His118. Residues Thr395 and 418-420 contribute to the thiamine diphosphate site; that span reads GSI. Asp450 lines the Mg(2+) pocket. Thiamine diphosphate is bound by residues 451-452 and 477-482; these read GS and NDGYTI. Positions 477 and 479 each coordinate Mg(2+). Glu483 lines the pyruvate pocket.

Belongs to the TPP enzyme family. Homotetramer. It depends on Mg(2+) as a cofactor. Requires thiamine diphosphate as cofactor.

It carries out the reaction a 2-oxocarboxylate + H(+) = an aldehyde + CO2. The enzyme catalyses pyruvate + H(+) = acetaldehyde + CO2. The sequence is that of Putative pyruvate decarboxylase C13A11.06 from Schizosaccharomyces pombe (strain 972 / ATCC 24843) (Fission yeast).